An 85-amino-acid polypeptide reads, in one-letter code: U4-theraphotoxin-Hhn1t (85 aa).

Residues 1–22 (MKVTLIAILTCAAVLVLHTTAA) form the signal peptide. Residues 23-48 (EELEAESQLMEVGMPDTELAAVDEER) constitute a propeptide that is removed on maturation. 3 cysteine pairs are disulfide-bonded: Cys-52–Cys-66, Cys-56–Cys-77, and Cys-71–Cys-82.

This sequence belongs to the neurotoxin 12 (Hwtx-2) family. 02 (Hwtx-2) subfamily. Expressed by the venom gland.

The protein resides in the secreted. Postsynaptic neurotoxin. The protein is U4-theraphotoxin-Hhn1t of Cyriopagopus hainanus (Chinese bird spider).